The following is a 180-amino-acid chain: Pro-glucagon (180 aa).

Residues 1 to 20 form the signal peptide; the sequence is MKNIYIVAGFFVVLVQGSWQ. The disordered stretch occupies residues 25-59; it reads DTEEKSRSFPASQTDPLEDPDQINEDKRHSQGTFT. Serine 54 carries the phosphoserine modification. Residues 84-89 constitute a propeptide that is removed on maturation; that stretch reads NRNNIA. Phosphoserine occurs at positions 105 and 108. Residue arginine 127 is modified to Arginine amide. Residues 131-145 constitute a propeptide that is removed on maturation; the sequence is DFPEEVTIVEELGRR. Phosphoserine occurs at positions 150 and 152.

It belongs to the glucagon family. Proglucagon is post-translationally processed in a tissue-specific manner in pancreatic A cells and intestinal L cells. In pancreatic A cells, the major bioactive hormone is glucagon cleaved by PCSK2/PC2. In the intestinal L cells PCSK1/PC1 liberates GLP-1, GLP-2, glicentin and oxyntomodulin. GLP-1 is further N-terminally truncated by post-translational processing in the intestinal L cells resulting in GLP-1(7-37) GLP-1-(7-36)amide. The C-terminal amidation is neither important for the metabolism of GLP-1 nor for its effects on the endocrine pancreas.

The protein resides in the secreted. Its function is as follows. Plays a key role in glucose metabolism and homeostasis. Regulates blood glucose by increasing gluconeogenesis and decreasing glycolysis. A counterregulatory hormone of insulin, raises plasma glucose levels in response to insulin-induced hypoglycemia. Plays an important role in initiating and maintaining hyperglycemic conditions in diabetes. Functionally, potent stimulator of glucose-dependent insulin release. Also stimulates insulin release in response to IL6. Plays important roles on gastric motility and the suppression of plasma glucagon levels. May be involved in the suppression of satiety and stimulation of glucose disposal in peripheral tissues, independent of the actions of insulin. Has growth-promoting activities on intestinal epithelium. May also regulate the hypothalamic pituitary axis (HPA) via effects on LH, TSH, CRH, oxytocin, and vasopressin secretion. Increases islet mass through stimulation of islet neogenesis and pancreatic beta cell proliferation. Inhibits beta cell apoptosis. Stimulates intestinal growth and up-regulates villus height in the small intestine, concomitant with increased crypt cell proliferation and decreased enterocyte apoptosis. The gastrointestinal tract, from the stomach to the colon is the principal target for GLP-2 action. Plays a key role in nutrient homeostasis, enhancing nutrient assimilation through enhanced gastrointestinal function, as well as increasing nutrient disposal. Stimulates intestinal glucose transport and decreases mucosal permeability. In terms of biological role, significantly reduces food intake. Inhibits gastric emptying in humans. Suppression of gastric emptying may lead to increased gastric distension, which may contribute to satiety by causing a sensation of fullness. Its function is as follows. May modulate gastric acid secretion and the gastro-pyloro-duodenal activity. May play an important role in intestinal mucosal growth in the early period of life. This chain is Pro-glucagon (GCG), found in Mesocricetus auratus (Golden hamster).